Here is a 340-residue protein sequence, read N- to C-terminus: Ferrochelatase (340 aa).

Positions 189 and 292 each coordinate Fe cation.

Belongs to the ferrochelatase family.

Its subcellular location is the cytoplasm. The enzyme catalyses heme b + 2 H(+) = protoporphyrin IX + Fe(2+). Its pathway is porphyrin-containing compound metabolism; protoheme biosynthesis; protoheme from protoporphyrin-IX: step 1/1. Its function is as follows. Catalyzes the ferrous insertion into protoporphyrin IX. The sequence is that of Ferrochelatase from Pseudomonas aeruginosa (strain UCBPP-PA14).